The primary structure comprises 303 residues: E3 ubiquitin-protein ligase SINA-like 3 (303 aa).

Residues 1-30 (MENITNNSERSLDRPKRQRPVSMENVGGTA) form a disordered region. An RING-type zinc finger spans residues 49 to 85 (CPICYHKLGAPIYQCDNGHIACSSCCKKVKYKCPYCS). The tract at residues 99–286 (IVEAVVVSCP…MSIPYYLLDE (188 aa)) is SBD. Residues 102-162 (AVVVSCPNAK…LYRHYHAEHK (61 aa)) form an SIAH-type zinc finger. Residues Cys107, Cys114, His128, Cys132, Cys139, Cys144, His156, and His161 each coordinate Zn(2+).

It belongs to the SINA (Seven in absentia) family.

The catalysed reaction is S-ubiquitinyl-[E2 ubiquitin-conjugating enzyme]-L-cysteine + [acceptor protein]-L-lysine = [E2 ubiquitin-conjugating enzyme]-L-cysteine + N(6)-ubiquitinyl-[acceptor protein]-L-lysine.. It functions in the pathway protein modification; protein ubiquitination. E3 ubiquitin-protein ligase that mediates ubiquitination and subsequent proteasomal degradation of target proteins. E3 ubiquitin ligases accept ubiquitin from an E2 ubiquitin-conjugating enzyme in the form of a thioester and then directly transfers the ubiquitin to targeted substrates. It probably triggers the ubiquitin-mediated degradation of different substrates. The protein is E3 ubiquitin-protein ligase SINA-like 3 of Arabidopsis thaliana (Mouse-ear cress).